The primary structure comprises 166 residues: Coiled-coil domain-containing protein 12 (166 aa).

Met-1 carries the post-translational modification N-acetylmethionine. Residues 1–56 (MEATTAGVGRLEEEALRRKERLKALREKTGRKDKEDGEPKTKHLREEEEEGEKHRE) form a disordered region. Positions 8–28 (VGRLEEEALRRKERLKALREK) form a coiled coil. Residues 10-56 (RLEEEALRRKERLKALREKTGRKDKEDGEPKTKHLREEEEEGEKHRE) are compositionally biased toward basic and acidic residues. Residue Lys-53 is modified to N6-acetyllysine. Residue Lys-94 forms a Glycyl lysine isopeptide (Lys-Gly) (interchain with G-Cter in SUMO2) linkage. Residues 117 to 144 (KRDVAKKLEKLKKRTQRAIAELIRERLK) adopt a coiled-coil conformation. A disordered region spans residues 147–166 (EDSLASAVDAATEQKTCDSD). Residues Ser-149 and Ser-165 each carry the phosphoserine modification.

In Homo sapiens (Human), this protein is Coiled-coil domain-containing protein 12 (CCDC12).